The sequence spans 719 residues: ATP-dependent RNA helicase p62 (719 aa).

Residues 94–234 (AQSQRAFRDS…GSQDLPMRPV (141 aa)) form a disordered region. 2 stretches are compositionally biased toward basic and acidic residues: residues 99–108 (AFRDSSKPDS) and 137–171 (EEIKIEGVMAPHDRDFGHSGRGGRGGDRGGDDRRG). Positions 172–188 (GGGGGNRFGGGGGGGDY) are enriched in gly residues. Residues 194–205 (GRVEKRRDDRGG) show a composition bias toward basic and acidic residues. Positions 206 to 226 (GNRFGGGGGFGDRRGGGGGGS) are enriched in gly residues. The Q motif signature appears at 281-309 (QDFSEVHLPDYVMKEIRRQGYKAPTAIQA). The Helicase ATP-binding domain maps to 312-487 (WPIAMSGSNF…EDFLGNYIQI (176 aa)). Position 325–332 (325–332 (AKTGSGKT)) interacts with ATP. The DEAD box signature appears at 435–438 (DEAD). The Helicase C-terminal domain maps to 519–664 (LLSDIYDTSE…EINPALENLA (146 aa)). Residues 689 to 719 (GGGFKKGSLSNGRGFGGGGGGGGEGRHSRFD) form a disordered region. Residues 701–711 (RGFGGGGGGGG) show a composition bias toward gly residues.

It belongs to the DEAD box helicase family. DDX5/DBP2 subfamily. In terms of assembly, interacts with Fmr1 to form the RNA-induced silencing complex (RISC), a ribonucleoprotein (RNP) complex involved in translation regulation, other components of the complex are RpL5, RpL11, AGO2 and Dcr-1.

The protein localises to the nucleus. It is found in the nucleolus. Its subcellular location is the cytoplasm. It localises to the cytosol. The catalysed reaction is ATP + H2O = ADP + phosphate + H(+). Functionally, as an RNA helicase, unwinds RNA and alters RNA structures through ATP binding and hydrolysis. Involved in multiple cellular processes, including pre-mRNA splicing, alternative splicing, rRNA processing and miRNA processing, as well as transcription regulation. Plays a role in innate immunity. Specifically restricts bunyavirus infection, including Rift Valley fever virus (RVFV) or La Crosse virus (LACV), but not vesicular stomatitis virus (VSV), in an interferon- and DROSHA-independent manner. This Drosophila melanogaster (Fruit fly) protein is ATP-dependent RNA helicase p62 (Rm62).